Reading from the N-terminus, the 183-residue chain is Cyanate hydratase (183 aa).

Catalysis depends on residues Arg-118, Glu-121, and Ser-144.

The protein belongs to the cyanase family.

The catalysed reaction is cyanate + hydrogencarbonate + 3 H(+) = NH4(+) + 2 CO2. In terms of biological role, catalyzes the reaction of cyanate with bicarbonate to produce ammonia and carbon dioxide. The polypeptide is Cyanate hydratase (Cryptococcus neoformans var. neoformans serotype D (strain B-3501A) (Filobasidiella neoformans)).